Consider the following 506-residue polypeptide: Bone morphogenetic protein 6 (506 aa).

The N-terminal stretch at 1–20 is a signal peptide; the sequence is MPGLGRRAQWLCWWWGLLCS. Positions 21–367 are excised as a propeptide; that stretch reads CGPPPLRPPL…VSEVHVRTTR (347 aa). Disordered regions lie at residues 44-64, 87-125, and 139-195; these read AGGS…SGFL, PHRP…RLKS, and KDDE…PLTS. The span at 96 to 112 shows a compositional bias: low complexity; the sequence is LQQPQSPVLPQQQQSQQ. Residues 140–153 are compositionally biased toward acidic residues; it reads DDEEDGVSEGEGLE. N-linked (GlcNAc...) asparagine glycans are attached at residues Asn-234, Asn-262, Asn-379, Asn-397, and Asn-447. The segment at 366 to 397 is disordered; the sequence is TRSASSRRRQQSRNRSTQSQDVSRGSSASDYN. Over residues 386–397 the composition is skewed to polar residues; that stretch reads DVSRGSSASDYN. Intrachain disulfides connect Cys-405–Cys-471, Cys-434–Cys-503, and Cys-438–Cys-505.

Belongs to the TGF-beta family. In terms of assembly, interacts with SOSTDC1. Interacts (when glycosylated) with type I receptor ACVR1; the interaction may induce HAMP expression. Interacts with type II receptor ACVR2B. Interacts with Hemojuvelin/HJV. Interacts with ERFE; the interaction inhibits BMP-induced transcription of HAMP. Interacts with BMPR1A/ALK3. Forms heterodimers with BMP2 in vitro; the heterodimer then binds to its receptor BMPR1A /ALK3 and may induce HAMP expression.

The protein resides in the secreted. In terms of biological role, growth factor of the TGF-beta superfamily that plays essential roles in many developmental processes including cartilage and bone formation. Also plays an important role in the regulation of HAMP/hepcidin expression and iron metabolism by acting as a ligand for hemojuvelin/HJV. Also acts to promote expression of HAMP, potentially via the interaction with its receptor BMPR1A/ALK3. Initiates the canonical BMP signaling cascade by associating with type I receptor ACVR1 and type II receptor ACVR2B. In turn, ACVR1 propagates signal by phosphorylating SMAD1/5/8 that travel to the nucleus and act as activators and repressors of transcription of target. Can also signal through non-canonical pathway such as TAZ-Hippo signaling cascade to modulate VEGF signaling by regulating VEGFR2 expression. The chain is Bone morphogenetic protein 6 (Bmp6) from Rattus norvegicus (Rat).